We begin with the raw amino-acid sequence, 211 residues long: Protein-methionine-sulfoxide reductase heme-binding subunit MsrQ (211 aa).

5 consecutive transmembrane segments (helical) span residues Val8–Trp28, Phe54–Ile74, Leu82–Val102, Pro116–Thr136, and Phe153–Ser173.

This sequence belongs to the MsrQ family. Heterodimer of a catalytic subunit (MsrP) and a heme-binding subunit (MsrQ). FMN serves as cofactor. Requires heme b as cofactor.

The protein localises to the cell inner membrane. Part of the MsrPQ system that repairs oxidized periplasmic proteins containing methionine sulfoxide residues (Met-O), using respiratory chain electrons. Thus protects these proteins from oxidative-stress damage caused by reactive species of oxygen and chlorine generated by the host defense mechanisms. MsrPQ is essential for the maintenance of envelope integrity under bleach stress, rescuing a wide series of structurally unrelated periplasmic proteins from methionine oxidation, including the primary periplasmic chaperone SurA and the lipoprotein Pal. MsrQ provides electrons for reduction to the reductase catalytic subunit MsrP, using the quinone pool of the respiratory chain. This Escherichia coli O6:K15:H31 (strain 536 / UPEC) protein is Protein-methionine-sulfoxide reductase heme-binding subunit MsrQ.